The sequence spans 134 residues: Small ribosomal subunit protein uS11 (134 aa).

The protein belongs to the universal ribosomal protein uS11 family. Part of the 30S ribosomal subunit. Interacts with proteins S7 and S18. Binds to IF-3.

Functionally, located on the platform of the 30S subunit, it bridges several disparate RNA helices of the 16S rRNA. Forms part of the Shine-Dalgarno cleft in the 70S ribosome. In Variovorax paradoxus (strain S110), this protein is Small ribosomal subunit protein uS11.